A 937-amino-acid polypeptide reads, in one-letter code: Molybdenum cofactor sulfurase (937 aa).

N6-(pyridoxal phosphate)lysine is present on lysine 237. Cysteine 397 is an active-site residue. Disordered regions lie at residues 633 to 710 (GQGK…RRIL), 756 to 795 (PSPSTPSASPSNPLTPSPSPSTTSKPTPKPKQKPKQKLNP), and 897 to 921 (KEGTGMGMGTGTGTGTGTRSMGGNG). Positions 638–652 (MTRHAKAHLQRHQHQ) are enriched in basic residues. Residues 682-935 (TPPSPPDSDT…VRVGDVVRPS (254 aa)) form the MOSC domain. The segment covering 756–767 (PSPSTPSASPSN) has biased composition (low complexity). The span at 900–921 (TGMGMGTGTGTGTGTRSMGGNG) shows a compositional bias: gly residues.

It belongs to the class-V pyridoxal-phosphate-dependent aminotransferase family. MOCOS subfamily. The cofactor is pyridoxal 5'-phosphate.

The catalysed reaction is Mo-molybdopterin + L-cysteine + AH2 = thio-Mo-molybdopterin + L-alanine + A + H2O. It functions in the pathway cofactor biosynthesis; molybdopterin biosynthesis. Functionally, sulfurates the molybdenum cofactor. Sulfation of molybdenum is essential for xanthine dehydrogenase (XDH) and aldehyde oxidase (ADO) enzymes in which molybdenum cofactor is liganded by 1 oxygen and 1 sulfur atom in active form. The chain is Molybdenum cofactor sulfurase (nit-13) from Neurospora crassa (strain ATCC 24698 / 74-OR23-1A / CBS 708.71 / DSM 1257 / FGSC 987).